A 273-amino-acid chain; its full sequence is Aliphatic sulfonates import ATP-binding protein SsuB 2 (273 aa).

Residues 17-241 (LLDLRITRKL…PRDRRDPTLA (225 aa)) form the ABC transporter domain. ATP is bound at residue 50-57 (GPSGCGKS).

It belongs to the ABC transporter superfamily. Aliphatic sulfonates importer (TC 3.A.1.17.2) family. The complex is composed of two ATP-binding proteins (SsuB), two transmembrane proteins (SsuC) and a solute-binding protein (SsuA).

It is found in the cell inner membrane. The enzyme catalyses ATP + H2O + aliphatic sulfonate-[sulfonate-binding protein]Side 1 = ADP + phosphate + aliphatic sulfonateSide 2 + [sulfonate-binding protein]Side 1.. Functionally, part of the ABC transporter complex SsuABC involved in aliphatic sulfonates import. Responsible for energy coupling to the transport system. The chain is Aliphatic sulfonates import ATP-binding protein SsuB 2 from Burkholderia lata (strain ATCC 17760 / DSM 23089 / LMG 22485 / NCIMB 9086 / R18194 / 383).